The primary structure comprises 355 residues: UDP-N-acetylglucosamine--N-acetylmuramyl-(pentapeptide) pyrophosphoryl-undecaprenol N-acetylglucosamine transferase (355 aa).

UDP-N-acetyl-alpha-D-glucosamine contacts are provided by residues 14–16 (TGG), Asn-126, Arg-162, Ser-190, Ile-243, 262–267 (ALTVSE), and Gln-287.

It belongs to the glycosyltransferase 28 family. MurG subfamily.

Its subcellular location is the cell inner membrane. It carries out the reaction di-trans,octa-cis-undecaprenyl diphospho-N-acetyl-alpha-D-muramoyl-L-alanyl-D-glutamyl-meso-2,6-diaminopimeloyl-D-alanyl-D-alanine + UDP-N-acetyl-alpha-D-glucosamine = di-trans,octa-cis-undecaprenyl diphospho-[N-acetyl-alpha-D-glucosaminyl-(1-&gt;4)]-N-acetyl-alpha-D-muramoyl-L-alanyl-D-glutamyl-meso-2,6-diaminopimeloyl-D-alanyl-D-alanine + UDP + H(+). It functions in the pathway cell wall biogenesis; peptidoglycan biosynthesis. Functionally, cell wall formation. Catalyzes the transfer of a GlcNAc subunit on undecaprenyl-pyrophosphoryl-MurNAc-pentapeptide (lipid intermediate I) to form undecaprenyl-pyrophosphoryl-MurNAc-(pentapeptide)GlcNAc (lipid intermediate II). This is UDP-N-acetylglucosamine--N-acetylmuramyl-(pentapeptide) pyrophosphoryl-undecaprenol N-acetylglucosamine transferase from Vibrio campbellii (strain ATCC BAA-1116).